The following is a 132-amino-acid chain: uncharacterized protein (132 aa).

In terms of biological role, the presence of the two linear plasmids, termed pGKL1 and pGKL2, in strains of Kluyveromyces lactis confers the killer phenotype to the host cell, by promoting the secretion of a toxin able to inhibit the growth of sensitive strains. This is an uncharacterized protein from Kluyveromyces lactis (strain ATCC 8585 / CBS 2359 / DSM 70799 / NBRC 1267 / NRRL Y-1140 / WM37) (Yeast).